The chain runs to 177 residues: DELTA-stichotoxin-Hcr4b (177 aa).

Residues 3 to 12 form a plays an important role in the hemolytic activity region; it reads ALAGTITLGA. The N-terminal region stretch occupies residues 11-30; that stretch reads GASLGFQILDKVLGELGKVS. Positions 54, 87, 105, 107, 133, 137, and 138 each coordinate phosphocholine. The trp-rich region, which is important for the binding to lipid membrane stretch occupies residues 105–120; sequence SVPFDYNLYSNWWDVK.

This sequence belongs to the actinoporin family. Sea anemone subfamily. In terms of assembly, octamer or nonamer in membranes. Monomer in the soluble state.

The protein localises to the secreted. It localises to the nematocyst. Its subcellular location is the target cell membrane. In terms of biological role, pore-forming protein that forms cations-selective hydrophilic pores of around 1 nm and causes cardiac stimulation and cytolysis. Pore formation is a multi-step process that involves specific recognition of membrane sphingomyelin (but neither cholesterol nor phosphatidylcholine) using aromatic rich region and adjacent phosphocholine (POC) binding site, firm binding to the membrane (mainly driven by hydrophobic interactions) accompanied by the transfer of the N-terminal region to the lipid-water interface and finally pore formation after oligomerization of monomers. Cytolytic effects include red blood cells hemolysis, platelet aggregation and lysis, cytotoxic and cytostatic effects on fibroblasts. Lethality in mammals has been ascribed to severe vasospasm of coronary vessels, cardiac arrhythmia, and inotropic effects. Preincubation with exogenous sphingomyeline causes complete loss of hemolytic activity. This Radianthus crispa (Leathery sea anemone) protein is DELTA-stichotoxin-Hcr4b.